The primary structure comprises 238 residues: MNTNVLPPPDQKAEYVERMFSRIASGYDTMNGIMTLGLDRGWRTATVALAAPPSCGRALDIGTGTGDFLVELAQWMPDGLAVGVDFTLPMMRAGLPKIAGQRAVFVAGDALALPFDDESFDAITTGFTLRNVTDIAAAFREMWRVARVGGTVACLEVARPRQPLLRFGHWVYFQRIVPLMARALGADPEAYTYLPQSARVFPPPDELAQIMREAGWSDVTYRLVGLGAAAIHTGIKRG.

S-adenosyl-L-methionine-binding positions include threonine 65, aspartate 85, and 109–110 (DA).

It belongs to the class I-like SAM-binding methyltransferase superfamily. MenG/UbiE family.

It catalyses the reaction a 2-demethylmenaquinol + S-adenosyl-L-methionine = a menaquinol + S-adenosyl-L-homocysteine + H(+). Its pathway is quinol/quinone metabolism; menaquinone biosynthesis; menaquinol from 1,4-dihydroxy-2-naphthoate: step 2/2. Methyltransferase required for the conversion of demethylmenaquinol (DMKH2) to menaquinol (MKH2). This Roseiflexus castenholzii (strain DSM 13941 / HLO8) protein is Demethylmenaquinone methyltransferase.